Consider the following 150-residue polypeptide: Small ribosomal subunit protein uS7c (150 aa).

Belongs to the universal ribosomal protein uS7 family. As to quaternary structure, part of the 30S ribosomal subunit.

It is found in the plastid. It localises to the chloroplast. In terms of biological role, one of the primary rRNA binding proteins, it binds directly to 16S rRNA where it nucleates assembly of the head domain of the 30S subunit. This chain is Small ribosomal subunit protein uS7c (rps7), found in Huperzia lucidula (Shining clubmoss).